We begin with the raw amino-acid sequence, 295 residues long: Keratin-like protein KRT222 (295 aa).

The region spanning 1-150 (MELSQLLNEI…HLLEKEEIRY (150 aa)) is the IF rod domain. A coiled-coil region spans residues 2–150 (ELSQLLNEIR…HLLEKEEIRY (149 aa)).

It belongs to the intermediate filament family.

The polypeptide is Keratin-like protein KRT222 (KRT222) (Homo sapiens (Human)).